Consider the following 163-residue polypeptide: Nucleotide-binding protein DET1318 (163 aa).

This sequence belongs to the YajQ family.

Functionally, nucleotide-binding protein. The sequence is that of Nucleotide-binding protein DET1318 from Dehalococcoides mccartyi (strain ATCC BAA-2266 / KCTC 15142 / 195) (Dehalococcoides ethenogenes (strain 195)).